The sequence spans 153 residues: Arachidonate 5-lipoxygenase-activating protein (153 aa).

Over 1–8 the chain is Lumenal; the sequence is MDQETVGN. Residues 9–30 form a helical membrane-spanning segment; it reads VVLLAIVTLISVVQNGFFAHKV. Residues 31 to 52 are Cytoplasmic-facing; sequence EHESRTQNGRSFQRTGTLAFER. The chain crosses the membrane as a helical span at residues 53–77; sequence VYTANQNCVDAYPTFLAVLWSAGLL. Topologically, residues 78-80 are lumenal; it reads CSQ. A helical membrane pass occupies residues 81 to 102; it reads VPAAFAGLMYLLVRQKYFVGYL. The Cytoplasmic segment spans residues 103–107; the sequence is GERTQ. Residues 108 to 115 lie within the membrane without spanning it; sequence STPGYIFG. The chain crosses the membrane as a helical span at residues 116–128; that stretch reads KRIILFLFLMSVA. Residues 129-153 are Lumenal-facing; the sequence is GIFNYYLIFFFGSDFENYIKTVTTT.

The protein belongs to the MAPEG family. As to quaternary structure, homotrimer. Interacts with LTC4S and ALOX5.

The protein localises to the nucleus membrane. It localises to the endoplasmic reticulum membrane. Its function is as follows. Required for leukotriene biosynthesis by ALOX5 (5-lipoxygenase). Anchors ALOX5 to the membrane. Binds arachidonic acid, and could play an essential role in the transfer of arachidonic acid to ALOX5. Binds to MK-886, a compound that blocks the biosynthesis of leukotrienes. The protein is Arachidonate 5-lipoxygenase-activating protein (ALOX5AP) of Macaca mulatta (Rhesus macaque).